A 348-amino-acid chain; its full sequence is Ileal sodium/bile acid cotransporter (348 aa).

Over 1 to 28 (MNDPNSCVDNATVCSGASCVVPESNFNN) the chain is Extracellular. Asn-10 carries an N-linked (GlcNAc...) asparagine glycan. A helical transmembrane segment spans residues 29-49 (ILSVVLSTVLTILLALVMFSM). Residues 50-82 (GCNVEIKKFLGHIKRPWGICVGFLCQFGIMPLT) lie on the Cytoplasmic side of the membrane. The chain crosses the membrane as a helical span at residues 83–103 (GFILSVAFDILPLQAVVVLII). Over 104-126 (GCCPGGTASNILAYWVDGDMDLS) the chain is Extracellular. Residues 127–147 (VSMTTCSTLLALGMMPLCLLI) form a helical membrane-spanning segment. The Cytoplasmic portion of the chain corresponds to 148 to 157 (YTKMWVDSGS). A helical transmembrane segment spans residues 158-178 (IVIPYDNIGTSLVSLVVPVSI). Residues 179 to 195 (GMFVNHKWPQKAKIILK) lie on the Extracellular side of the membrane. The chain crosses the membrane as a helical span at residues 196-216 (IGSIAGAILIVLIAVVGGILY). The Cytoplasmic portion of the chain corresponds to 217 to 224 (QSAWIIAP). A helical membrane pass occupies residues 225–245 (KLWIIGTIFPVAGYSLGFLLA). Topologically, residues 246 to 284 (RIAGLPWYRCRTVAFETGMQNTQLCSTIVQLSFTPEELN) are extracellular. The chain crosses the membrane as a helical span at residues 285–305 (VVFTFPLIYSIFQLAFAAIFL). At 306 to 348 (GFYVAYKKCHGKNKAEIPESKENGTEPESSFYKANGGFQPDEK) the chain is on the cytoplasmic side. Over residues 320 to 329 (AEIPESKENG) the composition is skewed to basic and acidic residues. A disordered region spans residues 320 to 348 (AEIPESKENGTEPESSFYKANGGFQPDEK). Position 335 is a phosphoserine (Ser-335).

Belongs to the bile acid:sodium symporter (BASS) (TC 2.A.28) family. Monomer and homodimer. In terms of tissue distribution, mainly expressed in ileum and kidney, lower expression in cecum.

Its subcellular location is the membrane. It carries out the reaction taurocholate(out) + 2 Na(+)(out) = taurocholate(in) + 2 Na(+)(in). It catalyses the reaction cholate(out) + 2 Na(+)(out) = cholate(in) + 2 Na(+)(in). The catalysed reaction is taurochenodeoxycholate(out) + 2 Na(+)(out) = taurochenodeoxycholate(in) + 2 Na(+)(in). The enzyme catalyses tauroursodeoxycholate(out) + 2 Na(+)(out) = tauroursodeoxycholate(in) + 2 Na(+)(in). It carries out the reaction glycocholate(out) + 2 Na(+)(out) = glycocholate(in) + 2 Na(+)(in). It catalyses the reaction tauronorcholate(out) + 2 Na(+)(out) = tauronorcholate(in) + 2 Na(+)(in). The catalysed reaction is tauroallocholate(out) + 2 Na(+)(out) = tauroallocholate(in) + 2 Na(+)(in). The enzyme catalyses taurodeoxycholate(out) + 2 Na(+)(out) = taurodeoxycholate(in) + 2 Na(+)(in). It carries out the reaction tauro-beta-muricholate(out) + 2 Na(+)(out) = tauro-beta-muricholate(in) + 2 Na(+)(in). Plays a critical role in the sodium-dependent reabsorption of bile acids from the lumen of the small intestine. Transports various bile acids, unconjugated or conjugated, such as cholate and taurocholate. Also responsible for bile acid transport in the renal proximal tubules, a salvage mechanism that helps conserve bile acids. Works collaboratively with the Na(+)-taurocholate cotransporting polypeptide (NTCP), the organic solute transporter (OST), and the bile salt export pump (BSEP), to ensure efficacious biological recycling of bile acids during enterohepatic circulation. This is Ileal sodium/bile acid cotransporter (SLC10A2) from Homo sapiens (Human).